Consider the following 269-residue polypeptide: Troponin I (269 aa).

The tract at residues 1–104 (MADDEKKAAA…AKKGFMTPER (104 aa)) is disordered. Ala2 carries the post-translational modification N-acetylalanine. Residues 9-50 (AAPAAAPAAAAKPAAPAAAPAANGKAAPAANGKAAPAAAAAP) show a composition bias toward low complexity. Over residues 56 to 91 (DPNDPKVKAEEAKKAKQAEIERKRAEVRKRMEEASK) the composition is skewed to basic and acidic residues. The troponin T-interaction stretch occupies residues 162–171 (ERMYICEGQK). Residues 189 to 202 (NAQVNDLRGKFVKP) are actin-binding. Lys201 and Lys205 each carry N6,N6,N6-trimethyllysine. The segment at 239–269 (TLEEEEKEKKPDWSKGKPGDAKVKEEVEAEA) is disordered.

This sequence belongs to the troponin I family. As to quaternary structure, binds to actin and tropomyosin. All isoforms are expressed in somatic muscle. Isoforms containing exon 6a1 (isoforms 1 and 2) are expressed in all muscles but highest expression is in abdominal muscle and splanchnic muscle of the gut. Isoforms containing exon 6b1 (isoforms 5, 6, 9 and 10) are highly expressed in the tergal depressor of trochanter (TDT) muscle.

In terms of biological role, troponin I is the ATPase inhibitory subunit of troponin in the thin filament regulatory complex. Involved in the development and maintenance of muscle and nervous system. May also be involved in the cytoskeletal apparatus. In Drosophila melanogaster (Fruit fly), this protein is Troponin I (wupA).